The primary structure comprises 151 residues: KGKGGHNLYHVKGMVYCDTCRIQFITRVSTMMEGATVSLQCRNLTAGTETFKAEAVTDKLGMYTIKVDGDHEDDICQIVLVKSPGQECSEIPNDVYSEQAAKVTLTSNNGEASDVRNANALGFLKKAPLPECPEVLKELDMYDVPGSVTQN.

Disulfide bonds link Cys17–Cys88, Cys20–Cys132, and Cys41–Cys76. The N-linked (GlcNAc...) asparagine glycan is linked to Asn43.

This sequence belongs to the Ole e I family. In terms of processing, N-glycosylated. Contains fucose monosaccharides in the glycan structure. In terms of tissue distribution, expressed in pollen (at protein level).

It localises to the secreted. This chain is Pollen allergen Sal k 5.0101, found in Kali turgidum (Prickly saltwort).